Consider the following 458-residue polypeptide: Probable beta-eliminating lyase (458 aa).

The residue at position 257 (Lys257) is an N6-(pyridoxal phosphate)lysine.

Belongs to the beta-eliminating lyase family. It depends on pyridoxal 5'-phosphate as a cofactor.

This Trichomonas vaginalis (strain ATCC PRA-98 / G3) protein is Probable beta-eliminating lyase.